Here is a 521-residue protein sequence, read N- to C-terminus: GMP synthase [glutamine-hydrolyzing] (521 aa).

Residues 5–203 enclose the Glutamine amidotransferase type-1 domain; sequence KILILDFGSQ…VHEICGCGRD (199 aa). The active-site Nucleophile is cysteine 82. Residues histidine 177 and glutamate 179 contribute to the active site. The 193-residue stretch at 204-396 folds into the GMPS ATP-PPase domain; sequence WNMPDYVNEA…LGLPHEMVYR (193 aa). Residue 231-237 coordinates ATP; the sequence is SGGVDSS.

Homodimer.

It carries out the reaction XMP + L-glutamine + ATP + H2O = GMP + L-glutamate + AMP + diphosphate + 2 H(+). It functions in the pathway purine metabolism; GMP biosynthesis; GMP from XMP (L-Gln route): step 1/1. In terms of biological role, catalyzes the synthesis of GMP from XMP. The sequence is that of GMP synthase [glutamine-hydrolyzing] from Aromatoleum aromaticum (strain DSM 19018 / LMG 30748 / EbN1) (Azoarcus sp. (strain EbN1)).